The chain runs to 221 residues: Peptide methionine sulfoxide reductase MsrA (221 aa).

C54 is a catalytic residue.

Belongs to the MsrA Met sulfoxide reductase family.

The enzyme catalyses L-methionyl-[protein] + [thioredoxin]-disulfide + H2O = L-methionyl-(S)-S-oxide-[protein] + [thioredoxin]-dithiol. It carries out the reaction [thioredoxin]-disulfide + L-methionine + H2O = L-methionine (S)-S-oxide + [thioredoxin]-dithiol. Functionally, has an important function as a repair enzyme for proteins that have been inactivated by oxidation. Catalyzes the reversible oxidation-reduction of methionine sulfoxide in proteins to methionine. The polypeptide is Peptide methionine sulfoxide reductase MsrA (Methylobacterium nodulans (strain LMG 21967 / CNCM I-2342 / ORS 2060)).